Consider the following 591-residue polypeptide: L-fucose isomerase (591 aa).

Active-site proton acceptor residues include Glu-337 and Asp-361. Mn(2+) is bound by residues Glu-337, Asp-361, and His-528.

Belongs to the L-fucose isomerase family. In terms of assembly, homohexamer. It depends on Mn(2+) as a cofactor.

The protein resides in the cytoplasm. The catalysed reaction is L-fucose = L-fuculose. It participates in carbohydrate degradation; L-fucose degradation; L-lactaldehyde and glycerone phosphate from L-fucose: step 1/3. Functionally, converts the aldose L-fucose into the corresponding ketose L-fuculose. The chain is L-fucose isomerase from Escherichia coli O157:H7 (strain EC4115 / EHEC).